The sequence spans 449 residues: Adenylosuccinate lyase (449 aa).

N(6)-(1,2-dicarboxyethyl)-AMP contacts are provided by residues 9–10, 75–77, and 102–103; these read RY, KHD, and TS. The active-site Proton donor/acceptor is H150. Q224 serves as a coordination point for N(6)-(1,2-dicarboxyethyl)-AMP. The Proton donor/acceptor role is filled by S275. N(6)-(1,2-dicarboxyethyl)-AMP is bound by residues S276, 281–283, and 320–324; these read KMN and SSERI.

This sequence belongs to the lyase 1 family. Adenylosuccinate lyase subfamily. Homotetramer. Residues from neighboring subunits contribute catalytic and substrate-binding residues to each active site.

It carries out the reaction N(6)-(1,2-dicarboxyethyl)-AMP = fumarate + AMP. The enzyme catalyses (2S)-2-[5-amino-1-(5-phospho-beta-D-ribosyl)imidazole-4-carboxamido]succinate = 5-amino-1-(5-phospho-beta-D-ribosyl)imidazole-4-carboxamide + fumarate. It functions in the pathway purine metabolism; AMP biosynthesis via de novo pathway; AMP from IMP: step 2/2. It participates in purine metabolism; IMP biosynthesis via de novo pathway; 5-amino-1-(5-phospho-D-ribosyl)imidazole-4-carboxamide from 5-amino-1-(5-phospho-D-ribosyl)imidazole-4-carboxylate: step 2/2. Catalyzes two reactions in de novo purine nucleotide biosynthesis. Catalyzes the breakdown of 5-aminoimidazole- (N-succinylocarboxamide) ribotide (SAICAR or 2-[5-amino-1-(5-phospho-beta-D-ribosyl)imidazole-4-carboxamido]succinate) to 5-aminoimidazole-4-carboxamide ribotide (AICAR or 5-amino-1-(5-phospho-beta-D-ribosyl)imidazole-4-carboxamide) and fumarate, and of adenylosuccinate (ADS or N(6)-(1,2-dicarboxyethyl)-AMP) to adenosine monophosphate (AMP) and fumarate. This chain is Adenylosuccinate lyase (purB), found in Methanothermobacter thermautotrophicus (strain ATCC 29096 / DSM 1053 / JCM 10044 / NBRC 100330 / Delta H) (Methanobacterium thermoautotrophicum).